A 78-amino-acid polypeptide reads, in one-letter code: MLILTRRPGESLYLGENIRITVLGMQGKQVKLGLEVPGDTTVYREEVYKRVVEENRRALETSNNDLMVAAELWHETKK.

The protein belongs to the CsrA/RsmA family. In terms of assembly, homodimer; the beta-strands of each monomer intercalate to form a hydrophobic core, while the alpha-helices form wings that extend away from the core.

The protein resides in the cytoplasm. Functionally, a translational regulator that binds mRNA to regulate translation initiation and/or mRNA stability. Usually binds in the 5'-UTR at or near the Shine-Dalgarno sequence preventing ribosome-binding, thus repressing translation. Its main target seems to be the major flagellin gene, while its function is anatagonized by FliW. The chain is Translational regulator CsrA from Desulfovibrio desulfuricans (strain ATCC 27774 / DSM 6949 / MB).